The chain runs to 454 residues: UPF0210 protein EUBREC_1565 (454 aa).

Belongs to the UPF0210 family. Homodimer.

The protein is UPF0210 protein EUBREC_1565 of Agathobacter rectalis (strain ATCC 33656 / DSM 3377 / JCM 17463 / KCTC 5835 / VPI 0990) (Eubacterium rectale).